A 290-amino-acid chain; its full sequence is Inner membrane protein YebZ (290 aa).

At 1–10 the chain is on the periplasmic side; it reads MLAFTWIALR. A helical transmembrane segment spans residues 11-31; the sequence is FIHFTSLMLVFGFAMYGAWLA. Residues 32 to 49 lie on the Cytoplasmic side of the membrane; sequence PLTIRRLLAKRFLRLQQH. Residues 50–70 traverse the membrane as a helical segment; the sequence is AAVWSLISATAMLAVQGGLMG. The Periplasmic portion of the chain corresponds to 71-89; sequence TGWTDVFSPNIWQAVLQTQ. A helical transmembrane segment spans residues 90 to 110; sequence FGGIWLWQIVLALVTLIVALM. Over 111–117 the chain is Cytoplasmic; it reads QPRNMPR. A helical membrane pass occupies residues 118 to 138; that stretch reads LLFMLTTAQFILLAGVGHATL. At 139 to 151 the chain is on the periplasmic side; that stretch reads NEGVTAKIHQTNH. The helical transmembrane segment at 152-172 threads the bilayer; that stretch reads AIHLICAAAWFGGLLPVLWCM. Over 173-195 the chain is Cytoplasmic; that stretch reads QLIKGRWRHQAIQALMRFSWCGH. Residues 196 to 216 form a helical membrane-spanning segment; sequence FAVIGVLASGVLNALLITGFP. At 217 to 222 the chain is on the periplasmic side; sequence PTLTTY. The chain crosses the membrane as a helical span at residues 223-243; it reads WGQLLLLKAILVMIMVVIALA. Topologically, residues 244–260 are cytoplasmic; it reads NRYVLVPRMRQDEDRAA. Residues 261 to 281 form a helical membrane-spanning segment; the sequence is PWFVWMTKLEWAIGAVVLVII. The Periplasmic segment spans residues 282-290; the sequence is SLLATLEPF.

The protein belongs to the CopD family.

It is found in the cell inner membrane. This Escherichia coli (strain K12) protein is Inner membrane protein YebZ (yebZ).